The sequence spans 335 residues: Transcription factor IIIA (335 aa).

9 C2H2-type zinc fingers span residues 13 to 37, 43 to 67, 73 to 98, 105 to 129, 135 to 159, 162 to 188, 192 to 214, 221 to 246, and 252 to 276; these read YICS…LCKH, FPCT…SMTH, CKCD…QRAH, YECY…QYIH, FKCN…EKVH, YPCQ…AASH, TICD…KRTH, YKCP…LSFH, and FACG…ANTH. Positions 269–280 are enriched in basic and acidic residues; the sequence is LDRHANTHDPEK. The tract at residues 269 to 335 is disordered; sequence LDRHANTHDP…ATAMQNLSIK (67 aa). The span at 281–292 shows a compositional bias: basic residues; that stretch reads KKMKKPRPKKSL.

The protein localises to the nucleus. Its function is as follows. Involved in ribosomal large subunit biogenesis. Interacts with the internal control region (ICR) of approximately 50 bases within the 5S RNA genes, is required for correct transcription of these genes by RNA polymerase III. Also binds the transcribed 5S RNA's. The chain is Transcription factor IIIA (gtf3a) from Lithobates pipiens (Northern leopard frog).